The chain runs to 469 residues: MTSQLHKKGEAWSARFSEPMSELVKRYTSSVFFDKRLALVDIAGSLAHANMLAAQKIISADDLAAIERGMAQIKGEIERGEFEWQLDLEDVHLNIEARLTALIGDAGKRLHTGRSRNDQVATDIRLWLRGEIDRIGGLLNDLRGALIDLAEQNADTIMPGFTHLQVAQPVTFGHHLLAYVEMFSRDAERMRDCRTRVNRLPLGAAALAGTSYPIDRHAVAKSLGFDGICANSLDAVSDRDFAIEFTAAAALVMTHVSRFSEELVLWMSPRVGFIDIADRFCTGSSIMPQKKNPDVPELARGKTGRVNGHLMALLTLMKGQPLAYNKDNQEDKEPLFDTVDTVADTLRIFAEMVAGITVKPDAMRAAALQGFSTATDLADYLVKRGLPFRDAHEAVAHAVKICDDRGIDLADLTLDEMKRELPNVAQLIGDDVFDYLTLEGSVASRNHPGGTAPDQVRAAAQAARAALGK.

It belongs to the lyase 1 family. Argininosuccinate lyase subfamily.

It localises to the cytoplasm. The enzyme catalyses 2-(N(omega)-L-arginino)succinate = fumarate + L-arginine. It functions in the pathway amino-acid biosynthesis; L-arginine biosynthesis; L-arginine from L-ornithine and carbamoyl phosphate: step 3/3. The chain is Argininosuccinate lyase from Burkholderia multivorans (strain ATCC 17616 / 249).